The primary structure comprises 333 residues: MDSSNRTRVSEFLLLGFVENKDLQPLIYGLFLSMYLVTVIGNISIIVAIISDPCLHTPMYFFLSNLSFVDICFISTTVPKMLVNIQTQNNVITYAGCITQIYFFLLFVELDNFLLTIMAYDRYVAICHPMHYTVIMNYKLCGFLVLVSWIVSVLHALFQSLMMLALPFCTHLEIPHYFCEPNQVIQLTCSDAFLNDLVIYFTLVLLATVPLAGIFYSYFKIVSSICAISSVHGKYKAFSTCASHLSVVSLFYCTGLGVYLSSAANNSSQASATASVMYTVVTPMVNPFIYSLRNKDVKSVLKKTLCEEVIRSPPSLLHFFLVLCHLPCFIFCY.

The Extracellular segment spans residues 1 to 25 (MDSSNRTRVSEFLLLGFVENKDLQP). A glycan (N-linked (GlcNAc...) asparagine) is linked at N5. Residues 26-50 (LIYGLFLSMYLVTVIGNISIIVAII) form a helical membrane-spanning segment. The Cytoplasmic portion of the chain corresponds to 51 to 57 (SDPCLHT). A helical membrane pass occupies residues 58-79 (PMYFFLSNLSFVDICFISTTVP). Residues 80-100 (KMLVNIQTQNNVITYAGCITQ) lie on the Extracellular side of the membrane. A disulfide bridge connects residues C97 and C189. The chain crosses the membrane as a helical span at residues 101–120 (IYFFLLFVELDNFLLTIMAY). The Cytoplasmic segment spans residues 121–139 (DRYVAICHPMHYTVIMNYK). The helical transmembrane segment at 140-158 (LCGFLVLVSWIVSVLHALF) threads the bilayer. Residues 159 to 196 (QSLMMLALPFCTHLEIPHYFCEPNQVIQLTCSDAFLND) are Extracellular-facing. The helical transmembrane segment at 197 to 219 (LVIYFTLVLLATVPLAGIFYSYF) threads the bilayer. Topologically, residues 220 to 236 (KIVSSICAISSVHGKYK) are cytoplasmic. The helical transmembrane segment at 237–260 (AFSTCASHLSVVSLFYCTGLGVYL) threads the bilayer. At 261 to 272 (SSAANNSSQASA) the chain is on the extracellular side. A helical transmembrane segment spans residues 273-292 (TASVMYTVVTPMVNPFIYSL). Residues 293–333 (RNKDVKSVLKKTLCEEVIRSPPSLLHFFLVLCHLPCFIFCY) are Cytoplasmic-facing.

The protein belongs to the G-protein coupled receptor 1 family. In terms of tissue distribution, olfactory epithelium.

The protein resides in the cell membrane. Functionally, odorant receptor. This chain is Olfactory receptor 1078 (Olr1078), found in Rattus norvegicus (Rat).